We begin with the raw amino-acid sequence, 606 residues long: Double-stranded RNA-binding protein Staufen homolog 2 (606 aa).

DRBM domains are found at residues 8 to 75 and 95 to 181; these read TPMC…ESSL and TPTV…ALKN. Disordered stretches follow at residues 57 to 97 and 177 to 205; these read SIKK…ITPT and QALK…SDAS. A compositionally biased stretch (polar residues) spans 85–97; the sequence is ADSNSNPGSITPT. A compositionally biased stretch (basic and acidic residues) spans 192–205; sequence SEEKKETEENSDAS. 3 consecutive DRBM domains span residues 207–274, 307–375, and 493–557; these read SEIS…ELKK, NPIS…QLGY, and QPSQ…QLSE. Positions 580–606 are disordered; the sequence is RLAERTESKPTNSGTTAQDCKDSKAVV. The span at 588–597 shows a compositional bias: polar residues; it reads KPTNSGTTAQ.

RNA-binding protein required for the microtubule-dependent transport of RNAs within polarized cell types. The chain is Double-stranded RNA-binding protein Staufen homolog 2 (stau2) from Danio rerio (Zebrafish).